The following is a 366-amino-acid chain: tRNA/tmRNA (uracil-C(5))-methyltransferase (366 aa).

Residues Q189, Y217, N222, E238, and D298 each contribute to the S-adenosyl-L-methionine site. The active-site Nucleophile is C323. Catalysis depends on E357, which acts as the Proton acceptor.

Belongs to the class I-like SAM-binding methyltransferase superfamily. RNA M5U methyltransferase family. TrmA subfamily.

It catalyses the reaction uridine(54) in tRNA + S-adenosyl-L-methionine = 5-methyluridine(54) in tRNA + S-adenosyl-L-homocysteine + H(+). It carries out the reaction uridine(341) in tmRNA + S-adenosyl-L-methionine = 5-methyluridine(341) in tmRNA + S-adenosyl-L-homocysteine + H(+). Dual-specificity methyltransferase that catalyzes the formation of 5-methyluridine at position 54 (m5U54) in all tRNAs, and that of position 341 (m5U341) in tmRNA (transfer-mRNA). The chain is tRNA/tmRNA (uracil-C(5))-methyltransferase from Shewanella oneidensis (strain ATCC 700550 / JCM 31522 / CIP 106686 / LMG 19005 / NCIMB 14063 / MR-1).